Reading from the N-terminus, the 258-residue chain is Leucyl/phenylalanyl-tRNA--protein transferase (258 aa).

The protein belongs to the L/F-transferase family.

The protein localises to the cytoplasm. It catalyses the reaction N-terminal L-lysyl-[protein] + L-leucyl-tRNA(Leu) = N-terminal L-leucyl-L-lysyl-[protein] + tRNA(Leu) + H(+). The catalysed reaction is N-terminal L-arginyl-[protein] + L-leucyl-tRNA(Leu) = N-terminal L-leucyl-L-arginyl-[protein] + tRNA(Leu) + H(+). It carries out the reaction L-phenylalanyl-tRNA(Phe) + an N-terminal L-alpha-aminoacyl-[protein] = an N-terminal L-phenylalanyl-L-alpha-aminoacyl-[protein] + tRNA(Phe). Functions in the N-end rule pathway of protein degradation where it conjugates Leu, Phe and, less efficiently, Met from aminoacyl-tRNAs to the N-termini of proteins containing an N-terminal arginine or lysine. The chain is Leucyl/phenylalanyl-tRNA--protein transferase from Alkalilimnicola ehrlichii (strain ATCC BAA-1101 / DSM 17681 / MLHE-1).